Reading from the N-terminus, the 630-residue chain is Transposase B from transposon PsiTn554 (630 aa).

One can recognise a Core-binding (CB) domain in the interval 216-302 (TYFKQLVKRY…ILEGLFSTLH (87 aa)). One can recognise a Tyr recombinase domain in the interval 326–513 (AKPRFIDEFV…FDETLKNEFT (188 aa)). Active-site residues include arginine 363, lysine 391, histidine 465, arginine 468, and histidine 491. Tyrosine 500 functions as the O-(3'-phospho-DNA)-tyrosine intermediate in the catalytic mechanism.

Belongs to the 'phage' integrase family.

The sequence is that of Transposase B from transposon PsiTn554 (tnpB) from Staphylococcus aureus.